We begin with the raw amino-acid sequence, 455 residues long: Deoxyribodipyrimidine photo-lyase (455 aa).

The Photolyase/cryptochrome alpha/beta domain occupies 2–131 (SVAVVLFTSD…ELHVHDAVVT (130 aa)). FAD-binding positions include tyrosine 219 and 231–235 (TSRLS). Interaction with DNA regions lie at residues 266 to 273 (QLAWRDFH) and 330 to 331 (NR). 361-363 (DGD) is a binding site for FAD. Glutamine 392 lines the DNA pocket.

This sequence belongs to the DNA photolyase class-1 family. Monomer. FAD is required as a cofactor. The cofactor is coenzyme F420-(gamma-Glu)n.

It carries out the reaction cyclobutadipyrimidine (in DNA) = 2 pyrimidine residues (in DNA).. In terms of biological role, involved in repair of UV radiation-induced DNA damage. Catalyzes the light-dependent monomerization (300-600 nm) of cyclobutyl pyrimidine dimers (in cis-syn configuration), which are formed between adjacent bases on the same DNA strand upon exposure to ultraviolet radiation. The polypeptide is Deoxyribodipyrimidine photo-lyase (phr) (Streptomyces griseus).